A 474-amino-acid chain; its full sequence is Sulfide dehydrogenase subunit alpha (474 aa).

Residues 1-2 (MP) constitute a propeptide that is removed on maturation. [4Fe-4S] cluster is bound by residues cysteine 42, cysteine 45, cysteine 52, and cysteine 56. Cysteine 101, cysteine 107, and cysteine 111 together coordinate [3Fe-4S] cluster.

In terms of assembly, heterodimer of alpha and beta subunits. It depends on FAD as a cofactor. The cofactor is [3Fe-4S] cluster. [4Fe-4S] cluster is required as a cofactor.

It is found in the cytoplasm. The catalysed reaction is n sulfur + hydrogen sulfide + NADP(+) = (n+1) sulfur + NADPH. It carries out the reaction 2 reduced [2Fe-2S]-[ferredoxin] + NADP(+) + H(+) = 2 oxidized [2Fe-2S]-[ferredoxin] + NADPH. Functionally, a bifunctional enzyme that catalyzes the reduction of elemental sulfur or polysulfide to hydrogen sulfide with NADPH as electron donor. Also functions as a reduced ferredoxin:NADP oxidoreductase with a very high affinity for reduced ferredoxin. Exhibits a broad specificity for various physiological and non-physiological substrates with varied reduction potentials such as methyl viologen, benzyl viologen, FAD, FMN, methylene blue, 2,6-dichlorophenolindophenol (DCIP), cytochrome C and ferricyanide with highest preference for benzyl viologen. Does not reduce fumarate, succinate, nitrate, nitrite, sulfate, sulfite or protons. Does not possess any hydrogenase activity or NADPH-dependent glutamate synthase activity. This Pyrococcus furiosus (strain ATCC 43587 / DSM 3638 / JCM 8422 / Vc1) protein is Sulfide dehydrogenase subunit alpha.